Consider the following 86-residue polypeptide: MAKLAICILVFALFALALSARVPREESNPAQEFLTKAQGDFNEFIEKLKALDAKKVEGLFKDGLNTVQEGLQKLNETFLQAPAAST.

The signal sequence occupies residues 1–19; the sequence is MAKLAICILVFALFALALS. Propeptides lie at residues 20–34 and 45–86; these read ARVP…QEFL and IEKL…AAST.

As to expression, hemolymph (at protein level).

The protein resides in the secreted. The chain is Neuropeptide-like 2 (Nplp2) from Drosophila melanogaster (Fruit fly).